The primary structure comprises 130 residues: Small ribosomal subunit protein uS11 (130 aa).

Belongs to the universal ribosomal protein uS11 family. In terms of assembly, part of the 30S ribosomal subunit. Interacts with proteins S7 and S18. Binds to IF-3.

Functionally, located on the platform of the 30S subunit, it bridges several disparate RNA helices of the 16S rRNA. Forms part of the Shine-Dalgarno cleft in the 70S ribosome. The polypeptide is Small ribosomal subunit protein uS11 (Sulfurimonas denitrificans (strain ATCC 33889 / DSM 1251) (Thiomicrospira denitrificans (strain ATCC 33889 / DSM 1251))).